We begin with the raw amino-acid sequence, 271 residues long: uncharacterized protein (271 aa).

It belongs to the HAD-like hydrolase superfamily.

This is an uncharacterized protein from Staphylococcus aureus.